A 427-amino-acid polypeptide reads, in one-letter code: Glutamate-1-semialdehyde 2,1-aminomutase (427 aa).

K266 bears the N6-(pyridoxal phosphate)lysine mark.

The protein belongs to the class-III pyridoxal-phosphate-dependent aminotransferase family. HemL subfamily. In terms of assembly, homodimer. Requires pyridoxal 5'-phosphate as cofactor.

The protein resides in the cytoplasm. It carries out the reaction (S)-4-amino-5-oxopentanoate = 5-aminolevulinate. The protein operates within porphyrin-containing compound metabolism; protoporphyrin-IX biosynthesis; 5-aminolevulinate from L-glutamyl-tRNA(Glu): step 2/2. This chain is Glutamate-1-semialdehyde 2,1-aminomutase, found in Aromatoleum aromaticum (strain DSM 19018 / LMG 30748 / EbN1) (Azoarcus sp. (strain EbN1)).